Here is a 126-residue protein sequence, read N- to C-terminus: Fluoride-specific ion channel FluC (126 aa).

The next 4 membrane-spanning stretches (helical) occupy residues 4 to 24, 33 to 53, 67 to 87, and 97 to 117; these read PLLS…LLGL, IPLG…FAMA, FVIT…IEIV, and MAML…CLGL. 2 residues coordinate Na(+): Gly74 and Thr77.

It belongs to the fluoride channel Fluc/FEX (TC 1.A.43) family.

The protein resides in the cell inner membrane. The enzyme catalyses fluoride(in) = fluoride(out). Its activity is regulated as follows. Na(+) is not transported, but it plays an essential structural role and its presence is essential for fluoride channel function. Its function is as follows. Fluoride-specific ion channel. Important for reducing fluoride concentration in the cell, thus reducing its toxicity. The polypeptide is Fluoride-specific ion channel FluC (Acinetobacter baumannii (strain ACICU)).